The following is an 881-amino-acid chain: Probable intermembrane transport protein HI_1672 (881 aa).

The chain crosses the membrane as a helical span at residues Phe-30–Val-49.

Belongs to the PqiB family.

It is found in the cell inner membrane. The polypeptide is Probable intermembrane transport protein HI_1672 (Haemophilus influenzae (strain ATCC 51907 / DSM 11121 / KW20 / Rd)).